We begin with the raw amino-acid sequence, 557 residues long: MTNPRHNIRDVRAATGTELSAKSWMTEAPLRMLMNNLDPDVAERPHELVVYGGIGRAARTWEDFDRIVATLKTLTEEETLIVQSGKPVGVFKTHKDAPRVLIANSNLVPHWATWDHFNELDKKGLAMYGQMTAGSWIYIGTQGIVQGTYETFVEAGRQHYNGNLKGKWILTGGLGGMGGAQPLAAVMAGACCLAVECDETRVDFRLRTRYVDAKAHTLDEALALIDQWTKAGEAKSVGLIGNAADIFPELVKRGIRPDIVTDQTSAHDPINGYLPSGWTVAEWRAKQESDPKAVERAARASMKVHVAAMVDFWNMGVPTLDYGNNIRQVAKEEGLENAFAFPGFVPAYIRPLFCRGIGPFRWAALSGDPEDIYKTDAKVKELLPDNKHLHNWLDMARERIAFQGLPARICWVGLGDRHKLGLAFNEMVRSGELKAPVVIGRDHLDSGSVASPNRETEAMKDGSDAVSDWPLLNALLNCASGATWVSLHHGGGVGMGFSQHSGMVICADGTDDAARRLERVLWNDPATGVMRHADAGYDIALDCAKEKGLRLPGILGN.

NAD(+) contacts are provided by residues 52–53, glutamine 130, 176–178, glutamate 196, arginine 201, 242–243, 263–267, 273–274, and tyrosine 322; these read GG, GMG, NA, QTSAH, and YL. The active site involves cysteine 410. Glycine 492 serves as a coordination point for NAD(+).

The protein belongs to the urocanase family. NAD(+) is required as a cofactor.

The protein resides in the cytoplasm. It carries out the reaction 4-imidazolone-5-propanoate = trans-urocanate + H2O. It functions in the pathway amino-acid degradation; L-histidine degradation into L-glutamate; N-formimidoyl-L-glutamate from L-histidine: step 2/3. Its function is as follows. Catalyzes the conversion of urocanate to 4-imidazolone-5-propionate. This Allorhizobium ampelinum (strain ATCC BAA-846 / DSM 112012 / S4) (Agrobacterium vitis (strain S4)) protein is Urocanate hydratase.